Consider the following 213-residue polypeptide: Small ribosomal subunit protein eS6 (213 aa).

Belongs to the eukaryotic ribosomal protein eS6 family.

The sequence is that of Small ribosomal subunit protein eS6 from Sulfolobus acidocaldarius (strain ATCC 33909 / DSM 639 / JCM 8929 / NBRC 15157 / NCIMB 11770).